Here is a 529-residue protein sequence, read N- to C-terminus: Bifunctional purine biosynthesis protein PurH (529 aa).

In terms of domain architecture, MGS-like spans 2 to 148 (QHLRPIRRAL…KNHKDVTIVV (147 aa)).

This sequence belongs to the PurH family.

It carries out the reaction (6R)-10-formyltetrahydrofolate + 5-amino-1-(5-phospho-beta-D-ribosyl)imidazole-4-carboxamide = 5-formamido-1-(5-phospho-D-ribosyl)imidazole-4-carboxamide + (6S)-5,6,7,8-tetrahydrofolate. It catalyses the reaction IMP + H2O = 5-formamido-1-(5-phospho-D-ribosyl)imidazole-4-carboxamide. It participates in purine metabolism; IMP biosynthesis via de novo pathway; 5-formamido-1-(5-phospho-D-ribosyl)imidazole-4-carboxamide from 5-amino-1-(5-phospho-D-ribosyl)imidazole-4-carboxamide (10-formyl THF route): step 1/1. It functions in the pathway purine metabolism; IMP biosynthesis via de novo pathway; IMP from 5-formamido-1-(5-phospho-D-ribosyl)imidazole-4-carboxamide: step 1/1. The protein is Bifunctional purine biosynthesis protein PurH of Proteus mirabilis (strain HI4320).